We begin with the raw amino-acid sequence, 325 residues long: Deoxyhypusine hydroxylase (325 aa).

An N-acetylserine modification is found at Ser-2. 2 HEAT-like PBS-type repeats span residues 77–103 (LKHEVAYVLGQTKNLDAAPTLRHVMLD) and 110–136 (VRHEAAEALGALGDKDSLDDLNKAAKE). His-79, Glu-80, His-112, and Glu-113 together coordinate Fe cation. Ser-126 carries the phosphoserine modification. At Thr-187 the chain carries Phosphothreonine. HEAT-like PBS-type repeat units lie at residues 202–231 (LFQRYRAMFRLRDIGTDEAILALATGFSAE), 235–261 (FKHEIAYVFGQIGSPAAVPSLIEVLGR), and 268–294 (VRHEAAEALGAIASPEVVDVLKSYLND). Fe cation is bound by residues His-237, Glu-238, His-270, and Glu-271. At Ser-281 the chain carries Phosphoserine.

Belongs to the deoxyhypusine hydroxylase family. Fe(2+) is required as a cofactor.

The protein resides in the cytoplasm. Its subcellular location is the nucleus. The enzyme catalyses [eIF5A protein]-deoxyhypusine + AH2 + O2 = [eIF5A protein]-hypusine + A + H2O. Its pathway is protein modification; eIF5A hypusination. Functionally, catalyzes the hydroxylation of the N(6)-(4-aminobutyl)-L-lysine intermediate to form hypusine, an essential post-translational modification only found in mature eIF-5A factor. The protein is Deoxyhypusine hydroxylase of Saccharomyces cerevisiae (strain ATCC 204508 / S288c) (Baker's yeast).